Reading from the N-terminus, the 242-residue chain is Type III pantothenate kinase (242 aa).

An ATP-binding site is contributed by 7 to 14 (DLGNSRFK). Substrate contacts are provided by residues Y91 and 98 to 101 (GVDR). Residue D100 is the Proton acceptor of the active site. T121 contacts ATP. Residue T171 participates in substrate binding.

The protein belongs to the type III pantothenate kinase family. As to quaternary structure, homodimer. Requires NH4(+) as cofactor. The cofactor is K(+).

It is found in the cytoplasm. It carries out the reaction (R)-pantothenate + ATP = (R)-4'-phosphopantothenate + ADP + H(+). The protein operates within cofactor biosynthesis; coenzyme A biosynthesis; CoA from (R)-pantothenate: step 1/5. Catalyzes the phosphorylation of pantothenate (Pan), the first step in CoA biosynthesis. In Xanthomonas euvesicatoria pv. vesicatoria (strain 85-10) (Xanthomonas campestris pv. vesicatoria), this protein is Type III pantothenate kinase.